Reading from the N-terminus, the 228-residue chain is PKHD-type hydroxylase xcc-b100_1388 (228 aa).

The Fe2OG dioxygenase domain occupies 78-180; that stretch reads RIYPPLFNRY…RVASFFWIQS (103 aa). Fe cation-binding residues include histidine 96, aspartate 98, and histidine 161. Position 171 (arginine 171) interacts with 2-oxoglutarate.

The cofactor is Fe(2+). L-ascorbate serves as cofactor.

In Xanthomonas campestris pv. campestris (strain B100), this protein is PKHD-type hydroxylase xcc-b100_1388.